The primary structure comprises 351 residues: Homeobox protein rough sheath 1 (351 aa).

Disordered regions lie at residues 1–23 (MDQS…NSKA), 57–82 (AAAP…GAEM), and 187–229 (GGGS…PRAE). The span at 57-68 (AAAPSSSQQHQQ) shows a compositional bias: low complexity. The span at 214 to 229 (PNGRENDPPEIDPRAE) shows a compositional bias: basic and acidic residues. In terms of domain architecture, ELK spans 232–252 (ELKYQLLKKYSGYLSSLRQEF). Positions 253 to 316 (SKKKKKGKLP…NQRKRHWKPS (64 aa)) form a DNA-binding region, homeobox; TALE-type.

Belongs to the TALE/KNOX homeobox family.

It localises to the nucleus. Functionally, plays a possible role in patterning the placement of lateral organs along the axis of the shoot. Mutations in RS1 alters cell fate and causes unregulated cell division and expansion in the leaf. Probably binds to the DNA sequence 5'-TGAC-3'. The polypeptide is Homeobox protein rough sheath 1 (RS1) (Zea mays (Maize)).